We begin with the raw amino-acid sequence, 438 residues long: Methionine aminopeptidase 2 (438 aa).

A disordered region spans residues 1-89 (MAAQAAPAEE…LFPNKQYPKG (89 aa)). Residues 10-20 (ELSKLSVEETK) are compositionally biased toward basic and acidic residues. The segment covering 51–65 (AKKKKKRKPRKKKKA) has biased composition (basic residues). H191 provides a ligand contact to substrate. The a divalent metal cation site is built by D211, D222, and H291. Residue H299 coordinates substrate. The a divalent metal cation site is built by E324 and E419.

It belongs to the peptidase M24A family. Methionine aminopeptidase eukaryotic type 2 subfamily. It depends on Co(2+) as a cofactor. Zn(2+) serves as cofactor. Requires Mn(2+) as cofactor. The cofactor is Fe(2+).

Its subcellular location is the cytoplasm. It catalyses the reaction Release of N-terminal amino acids, preferentially methionine, from peptides and arylamides.. Its function is as follows. Cotranslationally removes the N-terminal methionine from nascent proteins. The N-terminal methionine is often cleaved when the second residue in the primary sequence is small and uncharged (Met-Ala-, Cys, Gly, Pro, Ser, Thr, or Val). The chain is Methionine aminopeptidase 2 from Sordaria macrospora (strain ATCC MYA-333 / DSM 997 / K(L3346) / K-hell).